The following is a 260-amino-acid chain: Carbonic anhydrase 2 (260 aa).

The region spanning 3–259 is the Alpha-carbonic anhydrase domain; it reads HHWGYDSHNG…LKSREVRASF (257 aa). Residue His-64 is the Proton donor/acceptor of the active site. Positions 94, 96, and 119 each coordinate Zn(2+). 198-199 provides a ligand contact to substrate; the sequence is TT.

The protein belongs to the alpha-carbonic anhydrase family. Zn(2+) serves as cofactor.

It is found in the cytoplasm. Its subcellular location is the cell membrane. It catalyses the reaction hydrogencarbonate + H(+) = CO2 + H2O. It carries out the reaction urea = cyanamide + H2O. Its activity is regulated as follows. Inhibited by acetazolamide. Catalyzes the reversible hydration of carbon dioxide. Can also hydrate cyanamide to urea. In Gallus gallus (Chicken), this protein is Carbonic anhydrase 2 (CA2).